Reading from the N-terminus, the 480-residue chain is Cysteine--tRNA ligase (480 aa).

Cys-29 is a Zn(2+) binding site. Residues 31 to 41 carry the 'HIGH' region motif; the sequence is PTVYADPHLGH. Residues Cys-220, His-245, and Glu-249 each contribute to the Zn(2+) site. The 'KMSKS' region motif lies at 276 to 280; sequence KMAKS. Lys-279 contacts ATP.

It belongs to the class-I aminoacyl-tRNA synthetase family. As to quaternary structure, monomer. Zn(2+) serves as cofactor.

The protein resides in the cytoplasm. It catalyses the reaction tRNA(Cys) + L-cysteine + ATP = L-cysteinyl-tRNA(Cys) + AMP + diphosphate. The sequence is that of Cysteine--tRNA ligase from Thermus thermophilus (strain ATCC 27634 / DSM 579 / HB8).